The chain runs to 2144 residues: Reducing polyketide synthase PKS2 (2144 aa).

Residues 10-436 (PMPLAIIGMS…GSNSHCIVRA (427 aa)) form the Ketosynthase family 3 (KS3) domain. Residues Cys183, His319, and His360 each act as for beta-ketoacyl synthase activity in the active site. The tract at residues 538 to 855 (VFAFTGQGAQ…VPSLHRGQNA (318 aa)) is malonyl-CoA:ACP transacylase (MAT). An N-terminal hotdog fold region spans residues 924-1058 (HDLLGSINSS…ALVKCEATTD (135 aa)). The tract at residues 924–1214 (HDLLGSINSS…RSYSIDGTTD (291 aa)) is dehydratase (DH) domain. The PKS/mFAS DH domain maps to 924–1237 (HDLLGSINSS…LAVEATLAPQ (314 aa)). The tract at residues 1076–1237 (HSCVGSPLLY…LAVEATLAPQ (162 aa)) is C-terminal hotdog fold. The interval 1461–1747 (GMPDSLYLQR…SETDSKKLLL (287 aa)) is enoyl reductase (ER) domain. The tract at residues 1771–1948 (AVYLLVGGSG…PATSLALTAV (178 aa)) is ketoreductase (KR) domain. Positions 2059 to 2136 (EATQLLLAAI…KIVDSVIVKR (78 aa)) constitute a Carrier domain. Ser2096 carries the post-translational modification O-(pantetheine 4'-phosphoryl)serine.

The protein operates within mycotoxin biosynthesis. In terms of biological role, reducing polyketide synthase (PKS); part of the Tox1A locus, one of the 2 loci that mediate the biosynthesis of T-toxin, a family of linear polyketides 37 to 45 carbons in length, of which the major component is 41 carbons, and which leads to high virulence to maize. One of the PKSs (PKS1 or PKS2) could synthesize a precursor, used subsequently by the other PKS as starter unit, to add additional carbons. Variability in the length of the final carbon backbone C35-47 could be achieved by varying the number of condensation cycles, or use of different starter or extender units or might be due to decarboxylation of the penultimate product, catalyzed by DEC1. Additional proteins are required for the biosynthesis of T-toxin, including oxidoreductases RED1, RED2, RED3, LAM1 and OXI1, as well as esterase TOX9. The polypeptide is Reducing polyketide synthase PKS2 (Cochliobolus heterostrophus (strain C4 / ATCC 48331 / race T) (Southern corn leaf blight fungus)).